Reading from the N-terminus, the 168-residue chain is uncharacterized protein (168 aa).

A helical transmembrane segment spans residues 36–56; that stretch reads LNWWQLIVVVGIAISGIAAIA. Asparagine 74 carries an N-linked (GlcNAc...) asparagine; by host glycan. The next 3 helical transmembrane spans lie at 86 to 106, 115 to 135, and 143 to 163; these read FIII…LAWL, KLLT…ALTI, and MVKL…GFFI. A glycan (N-linked (GlcNAc...) asparagine; by host) is linked at asparagine 164.

It localises to the membrane. This is an uncharacterized protein from Acanthamoeba polyphaga mimivirus (APMV).